Reading from the N-terminus, the 197-residue chain is Recombination protein RecR (197 aa).

The segment at 57 to 72 (CSVCFALTEQNPCPIC) adopts a C4-type zinc-finger fold. Residues 79-174 (SVICVVETSQ…RVTRLAHGIP (96 aa)) form the Toprim domain.

It belongs to the RecR family.

In terms of biological role, may play a role in DNA repair. It seems to be involved in an RecBC-independent recombinational process of DNA repair. It may act with RecF and RecO. The protein is Recombination protein RecR of Trichlorobacter lovleyi (strain ATCC BAA-1151 / DSM 17278 / SZ) (Geobacter lovleyi).